The sequence spans 339 residues: DNA-directed RNA polymerase subunit alpha (339 aa).

The segment at 1–233 is alpha N-terminal domain (alpha-NTD); the sequence is MVREEVAGST…DLFLPFLHAE (233 aa). Residues 264–339 form an alpha C-terminal domain (alpha-CTD) region; that stretch reads KKGIPLNCIF…IDLLKNKLSF (76 aa).

It belongs to the RNA polymerase alpha chain family. In terms of assembly, in plastids the minimal PEP RNA polymerase catalytic core is composed of four subunits: alpha, beta, beta', and beta''. When a (nuclear-encoded) sigma factor is associated with the core the holoenzyme is formed, which can initiate transcription.

Its subcellular location is the plastid. The protein resides in the chloroplast. It carries out the reaction RNA(n) + a ribonucleoside 5'-triphosphate = RNA(n+1) + diphosphate. DNA-dependent RNA polymerase catalyzes the transcription of DNA into RNA using the four ribonucleoside triphosphates as substrates. The chain is DNA-directed RNA polymerase subunit alpha from Thinopyrum elongatum (Tall wheatgrass).